Consider the following 142-residue polypeptide: SsrA-binding protein (142 aa).

It belongs to the SmpB family.

It is found in the cytoplasm. Its function is as follows. Required for rescue of stalled ribosomes mediated by trans-translation. Binds to transfer-messenger RNA (tmRNA), required for stable association of tmRNA with ribosomes. tmRNA and SmpB together mimic tRNA shape, replacing the anticodon stem-loop with SmpB. tmRNA is encoded by the ssrA gene; the 2 termini fold to resemble tRNA(Ala) and it encodes a 'tag peptide', a short internal open reading frame. During trans-translation Ala-aminoacylated tmRNA acts like a tRNA, entering the A-site of stalled ribosomes, displacing the stalled mRNA. The ribosome then switches to translate the ORF on the tmRNA; the nascent peptide is terminated with the 'tag peptide' encoded by the tmRNA and targeted for degradation. The ribosome is freed to recommence translation, which seems to be the essential function of trans-translation. The chain is SsrA-binding protein from Mycoplasma mobile (strain ATCC 43663 / 163K / NCTC 11711) (Mesomycoplasma mobile).